Reading from the N-terminus, the 428-residue chain is Adenylosuccinate synthetase (428 aa).

Residues glycine 12 to lysine 18 and glycine 40 to threonine 42 contribute to the GTP site. Aspartate 13 functions as the Proton acceptor in the catalytic mechanism. Mg(2+) contacts are provided by aspartate 13 and glycine 40. IMP-binding positions include aspartate 13–lysine 16, asparagine 38–histidine 41, threonine 128, arginine 142, glutamine 223, threonine 238, and arginine 302. The Proton donor role is filled by histidine 41. Substrate is bound at residue threonine 298–arginine 304. GTP-binding positions include arginine 304, serine 330 to aspartate 332, and serine 412 to glycine 414.

This sequence belongs to the adenylosuccinate synthetase family. Homodimer. The cofactor is Mg(2+).

Its subcellular location is the cytoplasm. It carries out the reaction IMP + L-aspartate + GTP = N(6)-(1,2-dicarboxyethyl)-AMP + GDP + phosphate + 2 H(+). It participates in purine metabolism; AMP biosynthesis via de novo pathway; AMP from IMP: step 1/2. Its function is as follows. Plays an important role in the de novo pathway of purine nucleotide biosynthesis. Catalyzes the first committed step in the biosynthesis of AMP from IMP. This Shouchella clausii (strain KSM-K16) (Alkalihalobacillus clausii) protein is Adenylosuccinate synthetase.